Reading from the N-terminus, the 304-residue chain is UDP-N-acetylenolpyruvoylglucosamine reductase (304 aa).

Residues arginine 33–glycine 198 enclose the FAD-binding PCMH-type domain. Arginine 177 is a catalytic residue. Serine 227 (proton donor) is an active-site residue. Glutamate 297 is a catalytic residue.

This sequence belongs to the MurB family. FAD serves as cofactor.

Its subcellular location is the cytoplasm. The enzyme catalyses UDP-N-acetyl-alpha-D-muramate + NADP(+) = UDP-N-acetyl-3-O-(1-carboxyvinyl)-alpha-D-glucosamine + NADPH + H(+). Its pathway is cell wall biogenesis; peptidoglycan biosynthesis. Cell wall formation. This Clostridium botulinum (strain Alaska E43 / Type E3) protein is UDP-N-acetylenolpyruvoylglucosamine reductase.